A 477-amino-acid chain; its full sequence is Trigger factor (477 aa).

One can recognise a PPIase FKBP-type domain in the interval 169–254; that stretch reads EDRVTIDYLG…VKEVAKPNEL (86 aa). Residues 435 to 477 are disordered; it reads VSKEELTAEDEDAASEAKPAKKAAPKKKAAPKKKADEGKSEEA. Residues 454–466 are compositionally biased toward basic residues; that stretch reads AKKAAPKKKAAPK. The segment covering 467–477 has biased composition (basic and acidic residues); it reads KKADEGKSEEA.

This sequence belongs to the FKBP-type PPIase family. Tig subfamily.

The protein resides in the cytoplasm. The catalysed reaction is [protein]-peptidylproline (omega=180) = [protein]-peptidylproline (omega=0). In terms of biological role, involved in protein export. Acts as a chaperone by maintaining the newly synthesized protein in an open conformation. Functions as a peptidyl-prolyl cis-trans isomerase. The protein is Trigger factor of Brucella anthropi (strain ATCC 49188 / DSM 6882 / CCUG 24695 / JCM 21032 / LMG 3331 / NBRC 15819 / NCTC 12168 / Alc 37) (Ochrobactrum anthropi).